The primary structure comprises 856 residues: Lon protease homolog 2, peroxisomal (856 aa).

The region spanning 13–222 (LPLLLTHEGV…VTIPLLLRQI (210 aa)) is the Lon N-terminal domain. 379–386 (GPPGVGKT) contributes to the ATP binding site. Basic and acidic residues predominate over residues 586 to 608 (GQHREHKSEHLEAPEGEERKESV). The tract at residues 586 to 614 (GQHREHKSEHLEAPEGEERKESVPEGSKS) is disordered. Residues 655 to 841 (LNQPGVAIGL…DEVLNAAFDG (187 aa)) form the Lon proteolytic domain. Residues Ser747 and Lys790 contribute to the active site. Positions 854–856 (SKL) match the Microbody targeting signal motif.

It belongs to the peptidase S16 family.

The protein localises to the peroxisome matrix. The enzyme catalyses Hydrolysis of proteins in presence of ATP.. In terms of biological role, ATP-dependent serine protease that mediates the selective degradation of misfolded and unassembled polypeptides in the peroxisomal matrix. Necessary for type 2 peroxisome targeting signal (PTS2)-containing protein processing and facilitates peroxisome matrix protein import. The polypeptide is Lon protease homolog 2, peroxisomal (lonp2) (Xenopus laevis (African clawed frog)).